Consider the following 155-residue polypeptide: Transcriptional repressor NrdR (155 aa).

Residues 1–11 (MECPNCHQNAS) show a composition bias toward polar residues. The interval 1 to 22 (MECPNCHQNASRVIDSRPSDEN) is disordered. A zinc finger spans residues 3 to 34 (CPNCHQNASRVIDSRPSDENRAIRRRRECENC). In terms of domain architecture, ATP-cone spans 49 to 139 (LLVVKNDGTR…IYREFKDMSS (91 aa)).

The protein belongs to the NrdR family. Zn(2+) is required as a cofactor.

Functionally, negatively regulates transcription of bacterial ribonucleotide reductase nrd genes and operons by binding to NrdR-boxes. This chain is Transcriptional repressor NrdR, found in Lactobacillus acidophilus (strain ATCC 700396 / NCK56 / N2 / NCFM).